Here is a 1179-residue protein sequence, read N- to C-terminus: DNA-directed RNA polymerase subunit beta (1179 aa).

Belongs to the RNA polymerase beta chain family. As to quaternary structure, the RNAP catalytic core consists of 2 alpha, 1 beta, 1 beta' and 1 omega subunit. When a sigma factor is associated with the core the holoenzyme is formed, which can initiate transcription.

It catalyses the reaction RNA(n) + a ribonucleoside 5'-triphosphate = RNA(n+1) + diphosphate. Functionally, DNA-dependent RNA polymerase catalyzes the transcription of DNA into RNA using the four ribonucleoside triphosphates as substrates. The protein is DNA-directed RNA polymerase subunit beta of Oceanobacillus iheyensis (strain DSM 14371 / CIP 107618 / JCM 11309 / KCTC 3954 / HTE831).